Here is a 462-residue protein sequence, read N- to C-terminus: Asparagine--tRNA ligase (462 aa).

Belongs to the class-II aminoacyl-tRNA synthetase family. Homodimer.

The protein resides in the cytoplasm. It carries out the reaction tRNA(Asn) + L-asparagine + ATP = L-asparaginyl-tRNA(Asn) + AMP + diphosphate + H(+). This Synechocystis sp. (strain ATCC 27184 / PCC 6803 / Kazusa) protein is Asparagine--tRNA ligase.